The chain runs to 470 residues: Neuraminidase (470 aa).

Topologically, residues 1–6 (MNPNQK) are intravirion. Residues 7 to 27 (IITIGSICMAIGIISLILQIG) form a helical membrane-spanning segment. Residues 11–33 (GSICMAIGIISLILQIGNIISIW) are involved in apical transport and lipid raft association. The Virion surface segment spans residues 28–470 (NIISIWVSHS…GAELPFTIDK (443 aa)). Residues 36 to 90 (HSIQTGSQNHTGICNQRIITYENSTWVNQTYVNISNTNVVAGKDTTSMTLAGNSS) form a hypervariable stalk region region. N-linked (GlcNAc...) asparagine; by host glycans are attached at residues asparagine 44, asparagine 58, asparagine 63, asparagine 68, and asparagine 88. The tract at residues 91–470 (LCPIRGWAIY…GAELPFTIDK (380 aa)) is head of neuraminidase. Disulfide bonds link cysteine 92/cysteine 417, cysteine 124/cysteine 129, cysteine 184/cysteine 231, cysteine 233/cysteine 238, cysteine 279/cysteine 292, cysteine 281/cysteine 290, cysteine 318/cysteine 335, and cysteine 421/cysteine 447. Arginine 118 is a binding site for substrate. A glycan (N-linked (GlcNAc...) asparagine; by host) is linked at asparagine 146. The active-site Proton donor/acceptor is the aspartate 151. Arginine 152 serves as a coordination point for substrate. N-linked (GlcNAc...) asparagine; by host glycosylation is present at asparagine 235. 277 to 278 (EE) is a binding site for substrate. Arginine 293 contributes to the substrate binding site. Ca(2+)-binding residues include aspartate 294, glycine 298, and aspartate 324. N-linked (GlcNAc...) asparagine; by host glycosylation occurs at asparagine 365. Arginine 368 lines the substrate pocket. Catalysis depends on tyrosine 402, which acts as the Nucleophile. Asparagine 455 carries N-linked (GlcNAc...) asparagine; by host glycosylation.

The protein belongs to the glycosyl hydrolase 34 family. In terms of assembly, homotetramer. The cofactor is Ca(2+). Post-translationally, N-glycosylated.

It localises to the virion membrane. Its subcellular location is the host apical cell membrane. The catalysed reaction is Hydrolysis of alpha-(2-&gt;3)-, alpha-(2-&gt;6)-, alpha-(2-&gt;8)- glycosidic linkages of terminal sialic acid residues in oligosaccharides, glycoproteins, glycolipids, colominic acid and synthetic substrates.. With respect to regulation, inhibited by the neuraminidase inhibitors zanamivir (Relenza) and oseltamivir (Tamiflu). These drugs interfere with the release of progeny virus from infected cells and are effective against all influenza strains. Resistance to neuraminidase inhibitors is quite rare. Catalyzes the removal of terminal sialic acid residues from viral and cellular glycoconjugates. Cleaves off the terminal sialic acids on the glycosylated HA during virus budding to facilitate virus release. Additionally helps virus spread through the circulation by further removing sialic acids from the cell surface. These cleavages prevent self-aggregation and ensure the efficient spread of the progeny virus from cell to cell. Otherwise, infection would be limited to one round of replication. Described as a receptor-destroying enzyme because it cleaves a terminal sialic acid from the cellular receptors. May facilitate viral invasion of the upper airways by cleaving the sialic acid moieties on the mucin of the airway epithelial cells. Likely to plays a role in the budding process through its association with lipid rafts during intracellular transport. May additionally display a raft-association independent effect on budding. Plays a role in the determination of host range restriction on replication and virulence. Sialidase activity in late endosome/lysosome traffic seems to enhance virus replication. The polypeptide is Neuraminidase (Aves (Human)).